The chain runs to 1055 residues: Protein SUPPRESSOR OF QUENCHING 1, chloroplastic (1055 aa).

Residues 1–56 constitute a chloroplast transit peptide; it reads MALKLTSPPSVFSQSRRLSSSSLIPIRSKSTFTGFRSRTGVYLSKTTALQSSTKLS. At V57 the chain carries N-acetylvaline. At 59-327 the chain is on the stromal side; it reads AESPAATIAT…FQGSRRDILR (269 aa). Catalysis depends on D80, which acts as the Nucleophile. 2 residues coordinate Mg(2+): D80 and D82. D80 lines the substrate pocket. The active-site Proton donor is the D82. Residues E89, 118-122, 141-144, and 183-189 each bind substrate; these read TGEAK, AKER, and SSADRIK. D242 is a binding site for Mg(2+). Residues 328 to 345 traverse the membrane as a helical segment; sequence YGSLGIALSCVYFAATNW. Residues 346-1055 are Lumenal-facing; it reads KAMQYASPKA…AGGLQLQGTR (710 aa). The 178-residue stretch at 359 to 536 folds into the Thioredoxin domain; sequence ALVGAKSPSF…LDDVVAAALT (178 aa). The cysteines at positions 431 and 434 are disulfide-linked. NHL repeat units follow at residues 565–597, 611–647, 673–712, 802–832, and 854–887; these read PLKF…TDLE, GFQD…NHAL, GRKG…YSVL, LQHP…LDPV, and GAQL…IDLN.

It in the N-terminal section; belongs to the HAD-like hydrolase superfamily. In the C-terminal section; belongs to the thioredoxin family. Requires Mg(2+) as cofactor.

The protein resides in the plastid. It is found in the chloroplast thylakoid membrane. Required to maintain light harvesting efficiency, especially during nonphotochemical quenching (NPQ) recovery, via the regulation of chlorophyll excited-state lifetime probably by preventing the formation of a slowly reversible form of antenna quenching. The polypeptide is Protein SUPPRESSOR OF QUENCHING 1, chloroplastic (Arabidopsis thaliana (Mouse-ear cress)).